The chain runs to 164 residues: UPF0304 protein ECA3037 (164 aa).

The protein belongs to the UPF0304 family.

The chain is UPF0304 protein ECA3037 from Pectobacterium atrosepticum (strain SCRI 1043 / ATCC BAA-672) (Erwinia carotovora subsp. atroseptica).